We begin with the raw amino-acid sequence, 397 residues long: Sporulation-specific protein 20 (397 aa).

The disordered stretch occupies residues 1 to 26; sequence MGFRKILASKSHHSRHHNQHHKNLKL. The inhibitory region stretch occupies residues 4 to 50; the sequence is RKILASKSHHSRHHNQHHKNLKLQNHRYVLISNITGSHETKYLSPFR. Residues 10–26 are compositionally biased toward basic residues; it reads KSHHSRHHNQHHKNLKL. Positions 51–95 are positive regulatory region; that stretch reads MDNCSGSRRRDRLHVKLKSLRNKIHKQLHPNCRFDDATKTSDDKC. The t-SNARE coiled-coil homology domain occupies 330–392; the sequence is NQMEIDLYGN…QAKRYRLEKV (63 aa).

The protein belongs to the SNAP-25 family. As to quaternary structure, interacts with the t-SNARE SSO1 and the v-SNARE SNC2.

The protein localises to the cell membrane. The protein resides in the prospore membrane. Its function is as follows. Required to maintain the prospore membrane to the nucleus during sporulation in order to capture the daughter nuclei and form the spores. Mediates the fusion of exocytic vesicles with the plasma membrane during sporulation through its interactions with the t-SNARE SSO1 and v-SNARE SNC2. This Saccharomyces cerevisiae (strain ATCC 204508 / S288c) (Baker's yeast) protein is Sporulation-specific protein 20 (SPO20).